The following is a 319-amino-acid chain: Mitochondrial fission regulator 1-like (319 aa).

Residues 1 to 35 are disordered; sequence MASLGAGAEPESVLFGKDGTEACESPEGRRSGRRK.

Belongs to the MTFR1 family.

The protein resides in the mitochondrion outer membrane. Mitochondrial protein required for adaptation of miochondrial dynamics to metabolic changes. Regulates mitochondrial morphology at steady state and mediates AMPK-dependent stress-induced mitochondrial fragmentation via the control of OPA1 levels. The chain is Mitochondrial fission regulator 1-like (mtfr1l) from Xenopus tropicalis (Western clawed frog).